Consider the following 251-residue polypeptide: Protein crossbronx (251 aa).

One can recognise a UBC core domain in the interval 20 to 176 (QQEYKILAEY…TRENIRESLA (157 aa)). The segment at 211–251 (QSKHLESQSQQSNNGGNGGGGGAATGLSWVKEGEFKPLSVE) is disordered. Over residues 225-234 (GGNGGGGGAA) the composition is skewed to gly residues.

This sequence belongs to the ubiquitin-conjugating enzyme family. FTS subfamily.

This is Protein crossbronx (cbx) from Drosophila willistoni (Fruit fly).